A 374-amino-acid polypeptide reads, in one-letter code: Potassium channel subfamily K member 9 (374 aa).

The Cytoplasmic portion of the chain corresponds to 1 to 8; it reads MKRQNVRT. Residues 9–29 traverse the membrane as a helical segment; sequence LSLIICTFTYLLVGAAVFDAL. Topologically, residues 30-88 are extracellular; the sequence is ESDYEMREEEKLKAEEIRLKGKYNISSEDYRQLELVIMQSEPHRAGVQWKFAGSFYFAI. A glycan (N-linked (GlcNAc...) asparagine) is linked at Asn53. An intramembrane region (pore-forming) is located at residues 89 to 101; the sequence is TVITTIGYGHAAP. The Extracellular segment spans residues 102-107; that stretch reads GTDAGK. A helical membrane pass occupies residues 108–128; the sequence is AFCMFYAVLGIPLTLVMFQSL. Residues 129–158 lie on the Cytoplasmic side of the membrane; the sequence is GERMNTFVKYLLKRIKKCCGMHSTDVSMEN. A helical transmembrane segment spans residues 159 to 179; sequence MVTVGFFSCMGTLCIGAAAFS. Topologically, residues 180 to 194 are extracellular; that stretch reads HYEEWSFFQAYYYCF. The pore-forming intramembrane region spans 195–207; it reads ITLTTIGFGDYVA. The Extracellular portion of the chain corresponds to 208–218; that stretch reads LQKNRALQKKP. A helical membrane pass occupies residues 219-239; it reads LYVAFSFMYILVGLTVIGAFL. At 240–374 the chain is on the cytoplasmic side; the sequence is NLVVLRFLTM…HRLMKRRKSI (135 aa).

The protein belongs to the two pore domain potassium channel (TC 1.A.1.8) family. Homodimer. May form heterodimers with other family members.

Its subcellular location is the cell membrane. Its function is as follows. pH-dependent, voltage-insensitive, background potassium channel protein. This chain is Potassium channel subfamily K member 9 (kcnk9), found in Xenopus laevis (African clawed frog).